The following is a 428-amino-acid chain: Succinyl-CoA--L-malate CoA-transferase alpha subunit (428 aa).

The tract at residues 1–31 (MPPTGEEPSGHAESKPPASDPMSTPGTGQEQ) is disordered. Positions 21–31 (PMSTPGTGQEQ) are enriched in polar residues. The active-site Nucleophile is the Asp200.

The protein belongs to the CoA-transferase III family. In terms of assembly, forms a large complex composed of six heterodimers (alpha, beta).

The enzyme catalyses succinyl-CoA + (S)-malate = (S)-malyl-CoA + succinate. It carries out the reaction (3S)-citramalate + succinyl-CoA = (3S)-citramalyl-CoA + succinate. Involved in the 3-hydroxypropionate cycle used for autotrophic carbon dioxide fixation. Catalyzes the transfer of CoA moiety from succinyl-CoA to L-malate to yield L-malyl-CoA. It is highly specific for succinyl-CoA as the CoA donor, however it can accept L-citramalate instead of L-malate as the CoA acceptor. This Chloroflexus aurantiacus protein is Succinyl-CoA--L-malate CoA-transferase alpha subunit (smtA).